Reading from the N-terminus, the 263-residue chain is Eukaryotic translation initiation factor 3 subunit J-B (263 aa).

Residues 1-13 (MAAAAAAAAAAAA) are compositionally biased toward low complexity. Residues 1 to 115 (MAAAAAAAAA…EPEESKVLTP (115 aa)) form a disordered region. Residue A2 is modified to N-acetylalanine. The sufficient for interaction with EIF3B stretch occupies residues 6-74 (AAAAAAAAGD…KEEAEVKPEV (69 aa)). Residues S16, S18, and S25 each carry the phosphoserine modification. Acidic residues predominate over residues 45 to 66 (EGEDEDEDVKDNWDDDDDENKE). A compositionally biased stretch (basic and acidic residues) spans 67 to 111 (EAEVKPEVKISEKKKIAEKIKEKERQQKKRQEEIKKRLEEPEESK). Positions 75–140 (KISEKKKIAE…ESDLELAKET (66 aa)) form a coiled coil. Residue K111 forms a Glycyl lysine isopeptide (Lys-Gly) (interchain with G-Cter in SUMO2) linkage. T114 is modified (phosphothreonine). S132 carries the phosphoserine modification. A promotes stable association with the 40S ribosome region spans residues 248–263 (YGGYEGGYVQDYEDFM). At Y259 the chain carries Phosphotyrosine.

It belongs to the eIF-3 subunit J family. As to quaternary structure, component of the eukaryotic translation initiation factor 3 (eIF-3) complex, which is composed of 13 subunits: EIF3A, EIF3B, EIF3C, EIF3D, EIF3E, EIF3F, EIF3G, EIF3H, EIF3I, EIF3J, EIF3K, EIF3L and EIF3M. The eIF-3 complex appears to include 3 stable modules: module A is composed of EIF3A, EIF3B, EIF3G and EIF3I; module B is composed of EIF3F, EIF3H, and EIF3M; and module C is composed of EIF3C, EIF3D, EIF3E, EIF3K and EIF3L. EIF3C of module C binds EIF3B of module A and EIF3H of module B, thereby linking the three modules. EIF3J is a labile subunit that binds to the eIF-3 complex via EIF3B. The eIF-3 complex interacts with RPS6KB1 under conditions of nutrient depletion. Mitogenic stimulation leads to binding and activation of a complex composed of MTOR and RPTOR, leading to phosphorylation and release of RPS6KB1 and binding of EIF4B to eIF-3. Post-translationally, phosphorylated. Phosphorylation is enhanced upon serum stimulation.

The protein localises to the cytoplasm. Component of the eukaryotic translation initiation factor 3 (eIF-3) complex, which is required for several steps in the initiation of protein synthesis. The eIF-3 complex associates with the 40S ribosome and facilitates the recruitment of eIF-1, eIF-1A, eIF-2:GTP:methionyl-tRNAi and eIF-5 to form the 43S pre-initiation complex (43S PIC). The eIF-3 complex stimulates mRNA recruitment to the 43S PIC and scanning of the mRNA for AUG recognition. The eIF-3 complex is also required for disassembly and recycling of post-termination ribosomal complexes and subsequently prevents premature joining of the 40S and 60S ribosomal subunits prior to initiation. The eIF-3 complex specifically targets and initiates translation of a subset of mRNAs involved in cell proliferation, including cell cycling, differentiation and apoptosis, and uses different modes of RNA stem-loop binding to exert either translational activation or repression. This subunit binds directly within the mRNA entry channel of the 40S ribosome to the aminoacyl (A) site. It may regulate the interaction between the 43S PIC and mRNA. The sequence is that of Eukaryotic translation initiation factor 3 subunit J-B (Eif3j2) from Mus musculus (Mouse).